A 142-amino-acid polypeptide reads, in one-letter code: 3-hydroxyacyl-[acyl-carrier-protein] dehydratase FabZ (142 aa).

The active site involves H48.

Belongs to the thioester dehydratase family. FabZ subfamily.

It localises to the cytoplasm. The enzyme catalyses a (3R)-hydroxyacyl-[ACP] = a (2E)-enoyl-[ACP] + H2O. Involved in unsaturated fatty acids biosynthesis. Catalyzes the dehydration of short chain beta-hydroxyacyl-ACPs and long chain saturated and unsaturated beta-hydroxyacyl-ACPs. This chain is 3-hydroxyacyl-[acyl-carrier-protein] dehydratase FabZ, found in Ruminiclostridium cellulolyticum (strain ATCC 35319 / DSM 5812 / JCM 6584 / H10) (Clostridium cellulolyticum).